The primary structure comprises 874 residues: Alanine--tRNA ligase (874 aa).

Zn(2+) contacts are provided by H562, H566, C665, and H669.

Belongs to the class-II aminoacyl-tRNA synthetase family. Zn(2+) serves as cofactor.

It is found in the cytoplasm. The enzyme catalyses tRNA(Ala) + L-alanine + ATP = L-alanyl-tRNA(Ala) + AMP + diphosphate. In terms of biological role, catalyzes the attachment of alanine to tRNA(Ala) in a two-step reaction: alanine is first activated by ATP to form Ala-AMP and then transferred to the acceptor end of tRNA(Ala). Also edits incorrectly charged Ser-tRNA(Ala) and Gly-tRNA(Ala) via its editing domain. This Stutzerimonas stutzeri (strain A1501) (Pseudomonas stutzeri) protein is Alanine--tRNA ligase.